Consider the following 209-residue polypeptide: Uracil phosphoribosyltransferase (209 aa).

5-phospho-alpha-D-ribose 1-diphosphate-binding positions include arginine 79, arginine 104, and 131-139 (DPMLATGGS). Residues isoleucine 194 and 199 to 201 (GDA) each bind uracil. Aspartate 200 contributes to the 5-phospho-alpha-D-ribose 1-diphosphate binding site.

The protein belongs to the UPRTase family. Mg(2+) serves as cofactor.

It carries out the reaction UMP + diphosphate = 5-phospho-alpha-D-ribose 1-diphosphate + uracil. Its pathway is pyrimidine metabolism; UMP biosynthesis via salvage pathway; UMP from uracil: step 1/1. Its activity is regulated as follows. Allosterically activated by GTP. Functionally, catalyzes the conversion of uracil and 5-phospho-alpha-D-ribose 1-diphosphate (PRPP) to UMP and diphosphate. The chain is Uracil phosphoribosyltransferase from Shouchella clausii (strain KSM-K16) (Alkalihalobacillus clausii).